Here is a 301-residue protein sequence, read N- to C-terminus: tRNA dimethylallyltransferase (301 aa).

ATP is bound at residue 9-16 (GPTASGKS). Position 11-16 (11-16 (TASGKS)) interacts with substrate. The interval 34–37 (DSMQ) is interaction with substrate tRNA.

This sequence belongs to the IPP transferase family. Monomer. Mg(2+) serves as cofactor.

The enzyme catalyses adenosine(37) in tRNA + dimethylallyl diphosphate = N(6)-dimethylallyladenosine(37) in tRNA + diphosphate. Functionally, catalyzes the transfer of a dimethylallyl group onto the adenine at position 37 in tRNAs that read codons beginning with uridine, leading to the formation of N6-(dimethylallyl)adenosine (i(6)A). This chain is tRNA dimethylallyltransferase, found in Corynebacterium glutamicum (strain R).